The sequence spans 292 residues: Elongation factor Ts (292 aa).

The interval 79–82 (TDFV) is involved in Mg(2+) ion dislocation from EF-Tu.

This sequence belongs to the EF-Ts family.

It localises to the cytoplasm. Functionally, associates with the EF-Tu.GDP complex and induces the exchange of GDP to GTP. It remains bound to the aminoacyl-tRNA.EF-Tu.GTP complex up to the GTP hydrolysis stage on the ribosome. The protein is Elongation factor Ts of Xanthomonas campestris pv. campestris (strain B100).